Here is an 804-residue protein sequence, read N- to C-terminus: ABC transporter aclQ (804 aa).

A run of 9 helical transmembrane segments spans residues 3–23, 52–72, 97–117, 119–139, 155–175, 206–226, 239–259, 349–369, and 373–393; these read LAVLTLALCWAYPVTIYISYL, FTAIFWLQLVQCFDLAISITI, IAVFMFLAAGLLPDPDVPFSP, LSHSHAWIAGIIMEALQLAMF, LQLGLVMVRLVLFVAMVALYF, HGGWLDYVVGFSTLFPFLWPS, FVLLVIQRVVNILVPHQLGIV, LVFQLFPMVADLWIAALYFLI, and AFYSLIVITVTWLYLFVTIYM. In terms of domain architecture, ABC transmembrane type-1 spans 236-518; that stretch reads IFCFVLLVIQ…FGSFYTQVQN (283 aa). Asn460 carries N-linked (GlcNAc...) asparagine glycosylation. 2 helical membrane passes run 464–484 and 489–509; these read NLLFTAGVAIVCLLCAYQISA and VAMFVTLLTYLAQLQAPLNFF. The region spanning 552 to 786 is the ABC transporter domain; sequence VEFTHVNFAY…NGMYSQMWAK (235 aa). An ATP-binding site is contributed by 585–592; sequence GESGSGKS. N-linked (GlcNAc...) asparagine glycosylation is found at Asn639 and Asn797.

It belongs to the ABC transporter superfamily. ABCB family. Heavy Metal importer (TC 3.A.1.210) subfamily.

It is found in the membrane. Its function is as follows. ABC transporter; part of the gene cluster that mediates the biosynthesis of aspirochlorine (or antibiotic A30641), an unusual halogenated spiro compound with distinctive antifungal properties due to selective inhibition of protein biosynthesis, and which is also active against bacteria, viruses, and murine tumor cells. In Aspergillus oryzae (strain ATCC 42149 / RIB 40) (Yellow koji mold), this protein is ABC transporter aclQ.